We begin with the raw amino-acid sequence, 109 residues long: MVQLRRTITTNKVFQAITSTNDKVAHFVVFMWESWLFVKMFAEDIVTFRKLQANKYVLGVLICSLCASVTSEFAQSVVSRGQRVFDVKDIICNFWGSLLGVGIAFYQDR.

Residues 90–107 (IICNFWGSLLGVGIAFYQ) traverse the membrane as a helical segment.

The protein resides in the membrane. This is an uncharacterized protein from Saccharomyces cerevisiae (strain ATCC 204508 / S288c) (Baker's yeast).